We begin with the raw amino-acid sequence, 541 residues long: Eukaryotic translation initiation factor 3 subunit D-1 (541 aa).

The disordered stretch occupies residues 98–136 (VQKPPHQRGRFRNMRGRGGRGRNPRGGLNNHHHHGMTTL). A compositionally biased stretch (basic residues) spans 100-120 (KPPHQRGRFRNMRGRGGRGRN).

Belongs to the eIF-3 subunit D family. Component of the eukaryotic translation initiation factor 3 (eIF-3) complex. The eIF-3 complex interacts with pix.

The protein localises to the cytoplasm. Functionally, mRNA cap-binding component of the eukaryotic translation initiation factor 3 (eIF-3) complex, which is involved in protein synthesis of a specialized repertoire of mRNAs and, together with other initiation factors, stimulates binding of mRNA and methionyl-tRNAi to the 40S ribosome. The eIF-3 complex specifically targets and initiates translation of a subset of mRNAs involved in cell proliferation. In the eIF-3 complex, eif3d specifically recognizes and binds the 7-methylguanosine cap of a subset of mRNAs. The protein is Eukaryotic translation initiation factor 3 subunit D-1 of Drosophila persimilis (Fruit fly).